The chain runs to 643 residues: SURP and G-patch domain-containing protein 1 (643 aa).

Disordered regions lie at residues 48-69 (ARME…HPGE) and 97-119 (KAQT…SSLK). Threonine 128 is modified (phosphothreonine). One copy of the SURP motif 1 repeat lies at 187–229 (VIEKLARFVAEGGPELEKVAMEDYKDNPAFTFLHDKNSREFLY). Serine 252 carries the phosphoserine modification. The stretch at 262-305 (LAEKLARFIADGGPEVETIALQNNRENQAFSFLYDPNSQGYRYY) is one SURP motif 2 repeat. 2 disordered regions span residues 316–335 (KAGS…LRRK) and 360–393 (AVNP…DKVE). Serine 322 carries the phosphoserine modification. The Nuclear localization signal motif lies at 378–384 (KRKRKSR). Residues serine 407, serine 409, serine 412, and serine 483 each carry the phosphoserine modification. The G-patch domain occupies 560 to 607 (VENIGYQMLMKMGWKEGEGLGTEGQGIKNPVNKGATTIDGAGFGIDRP).

As to quaternary structure, component of the spliceosome.

It is found in the nucleus. Its function is as follows. Plays a role in pre-mRNA splicing. This Mus musculus (Mouse) protein is SURP and G-patch domain-containing protein 1 (Sugp1).